Reading from the N-terminus, the 377-residue chain is Progesterone receptor (377 aa).

The segment at 1 to 15 (EASQSPQYSFESLPQ) is modulating, Pro-Rich. A DNA-binding region (nuclear receptor) is located at residues 16–90 (KICLICGDEA…AGMVLGGRKF (75 aa)). 2 NR C4-type zinc fingers span residues 18 to 38 (CLIC…CGSC) and 54 to 78 (CAGR…LRKC). A Phosphoserine modification is found at S127. An NR LBD domain is found at 130 to 364 (QDLQLIPPLI…EFPEMMSEVI (235 aa)). The interval 138–377 (LINLLMSIEP…LPKILAGMVK (240 aa)) is AF2; mediates transcriptional activation.

This sequence belongs to the nuclear hormone receptor family. NR3 subfamily. As to quaternary structure, interacts with CUEDC2, SMARD1 and with UNC45A. Interacts with PRMT2. Interacts with NCOA2 and NCOA1. Interacts with KLF9. Interacts with GTF2B. Palmitoylated by ZDHHC7 and ZDHHC21. Palmitoylation is required for plasma membrane targeting and for rapid intracellular signaling via ERK and AKT kinases and cAMP generation.

The protein localises to the nucleus. Functionally, the steroid hormones and their receptors are involved in the regulation of eukaryotic gene expression and affect cellular proliferation and differentiation in target tissues. Transcriptional activator of several progesteron-dependent promoters in a variety of cell types. Involved in activation of SRC-dependent MAPK signaling on hormone stimulation. This Ovis aries (Sheep) protein is Progesterone receptor (PGR).